The sequence spans 80 residues: Exodeoxyribonuclease 7 small subunit (80 aa).

Belongs to the XseB family. In terms of assembly, heterooligomer composed of large and small subunits.

Its subcellular location is the cytoplasm. The enzyme catalyses Exonucleolytic cleavage in either 5'- to 3'- or 3'- to 5'-direction to yield nucleoside 5'-phosphates.. Bidirectionally degrades single-stranded DNA into large acid-insoluble oligonucleotides, which are then degraded further into small acid-soluble oligonucleotides. In Rickettsia africae (strain ESF-5), this protein is Exodeoxyribonuclease 7 small subunit.